Here is a 175-residue protein sequence, read N- to C-terminus: Orotate phosphoribosyltransferase (175 aa).

5-phospho-alpha-D-ribose 1-diphosphate is bound by residues R88, K89, K92, and 114–122 (EDVVTTARG). Orotate contacts are provided by T118 and R146.

This sequence belongs to the purine/pyrimidine phosphoribosyltransferase family. PyrE subfamily. In terms of assembly, homodimer. Mg(2+) serves as cofactor.

The enzyme catalyses orotidine 5'-phosphate + diphosphate = orotate + 5-phospho-alpha-D-ribose 1-diphosphate. Its pathway is pyrimidine metabolism; UMP biosynthesis via de novo pathway; UMP from orotate: step 1/2. Functionally, catalyzes the transfer of a ribosyl phosphate group from 5-phosphoribose 1-diphosphate to orotate, leading to the formation of orotidine monophosphate (OMP). The chain is Orotate phosphoribosyltransferase from Methanocella arvoryzae (strain DSM 22066 / NBRC 105507 / MRE50).